Consider the following 755-residue polypeptide: Cellulose synthase-like protein B3 (755 aa).

Transmembrane regions (helical) follow at residues 24–44 (VVDL…ILLM) and 51–71 (WVVA…ITSI). Catalysis depends on residues Asp136 and Asp461. 6 helical membrane passes run 534-556 (YLYI…LPAY), 569-589 (VYLG…LWEF), 615-635 (LFSI…VFIV), 674-694 (FLPG…CSVG), 702-722 (GSGL…LPFL), and 733-753 (IPWS…VFSV).

The protein belongs to the glycosyltransferase 2 family. Plant cellulose synthase-like B subfamily. In terms of tissue distribution, expressed in young seedlings, primarily in the vascular tissue.

The protein resides in the golgi apparatus membrane. In terms of biological role, thought to be a Golgi-localized beta-glycan synthase that polymerize the backbones of noncellulosic polysaccharides (hemicelluloses) of plant cell wall. The chain is Cellulose synthase-like protein B3 (CSLB3) from Arabidopsis thaliana (Mouse-ear cress).